Reading from the N-terminus, the 113-residue chain is Tachykinin-4 (113 aa).

A signal peptide spans 1–20 (MLPCLALLLLMELSVCTVAG). Methionine amide is present on methionine 67. A propeptide spanning residues 71–79 (VGGRPLIQP) is cleaved from the precursor. Leucine 95 is subject to Leucine amide. A propeptide spanning residues 98–113 (RSLFTEGREDEAQGSE) is cleaved from the precursor.

Belongs to the tachykinin family. Expressed at low levels in the uterus of both pregnant and non-pregnant women. Isoform 1 is found only in the adrenal gland and fetal liver. Isoform 2 is found in heart, liver, bone marrow, prostate, adrenal gland and testis. Isoform 3 and isoform 4 are expressed predominantly in adrenal gland and placenta.

It localises to the secreted. Tachykinins are active peptides which excite neurons, evoke behavioral responses, are potent vasodilators and secretagogues, and contract (directly or indirectly) many smooth muscles. Endokinin-A induces thermal hyperalgesia and pain-related behavior such as scratching following intrathecal administration in rats. These effects are suppressed by treatment with endokinin-C. Endokinin-A/B reduces arterial blood pressure and increases sperm motility. This Homo sapiens (Human) protein is Tachykinin-4.